We begin with the raw amino-acid sequence, 453 residues long: Tol-Pal system protein TolB (453 aa).

The signal sequence occupies residues 1–31; that stretch reads MINNLSISMTKVIKIILAIIIILFNTLSIFA.

It belongs to the TolB family. As to quaternary structure, the Tol-Pal system is composed of five core proteins: the inner membrane proteins TolA, TolQ and TolR, the periplasmic protein TolB and the outer membrane protein Pal. They form a network linking the inner and outer membranes and the peptidoglycan layer.

It is found in the periplasm. Its function is as follows. Part of the Tol-Pal system, which plays a role in outer membrane invagination during cell division and is important for maintaining outer membrane integrity. The sequence is that of Tol-Pal system protein TolB from Orientia tsutsugamushi (strain Ikeda) (Rickettsia tsutsugamushi).